Consider the following 408-residue polypeptide: UDP-N-acetylglucosamine--dolichyl-phosphate N-acetylglucosaminephosphotransferase (408 aa).

Residues 1–10 are Lumenal-facing; the sequence is MWAFPELPLP. A helical transmembrane segment spans residues 11–38; the sequence is LLVNLFGSLLGFVATVTLIPAFRSHFIA. At 39–58 the chain is on the cytoplasmic side; it reads ARLCGQDLNKLSRQQIPESQ. UDP-N-acetyl-alpha-D-glucosamine contacts are provided by residues 44-46 and Glu-56; that span reads QDL. Residues 59 to 78 form a helical membrane-spanning segment; the sequence is GVICGAVFLIILFCFIPFPF. At 79-91 the chain is on the lumenal side; sequence LNCFVEEQCKAFP. The helical transmembrane segment at 92-118 threads the bilayer; sequence HHEFVALIGALLAICCMIFLGFADDVL. Residues 119 to 121 lie on the Cytoplasmic side of the membrane; sequence NLP. The helical transmembrane segment at 122 to 143 threads the bilayer; sequence WRHKLLLPTAASLPLLMVYFTN. Lys-125 provides a ligand contact to dolichyl phosphate. Residues 144 to 166 lie on the Lumenal side of the membrane; the sequence is FGNTTIVVPKPFRWILGLHLDLG. Residue Asn-146 is glycosylated (N-linked (GlcNAc...) asparagine). Residues 167 to 186 traverse the membrane as a helical segment; the sequence is ILYYVYMGLLAVFCTNAINI. Dolichyl phosphate is bound at residue 178 to 186; that stretch reads VFCTNAINI. Asn-185 contacts Mg(2+). At 187–192 the chain is on the cytoplasmic side; sequence LAGING. Asn-191 lines the UDP-N-acetyl-alpha-D-glucosamine pocket. The helical transmembrane segment at 193-213 threads the bilayer; sequence LEAGQSLVISASIIVFNLVEL. The Lumenal portion of the chain corresponds to 214–218; it reads EGDYR. Residues 219–242 traverse the membrane as a helical segment; sequence DDHVFSLYFMIPFFFTTLGLLYHN. At 243–250 the chain is on the cytoplasmic side; sequence WYPSQVFV. A helical transmembrane segment spans residues 251–269; it reads GDTFCYFAGMTFAVVGILG. Asp-252 contacts Mg(2+). Residues 270–271 are Lumenal-facing; that stretch reads HF. Residues 272–293 traverse the membrane as a helical segment; the sequence is SKTMLLFFIPQVFNFLYSLPQL. Residues 294-375 lie on the Cytoplasmic side of the membrane; it reads LHAIPCPRHR…LLLKIFGPIH (82 aa). A UDP-N-acetyl-alpha-D-glucosamine-binding site is contributed by 301 to 303; it reads RHR. Residues 376–400 traverse the membrane as a helical segment; sequence ERNLTLLLLLLQILSSAVTFSIRYQ. Topologically, residues 401-408 are lumenal; that stretch reads LVRLFYDV.

This sequence belongs to the glycosyltransferase 4 family. Homodimer. Mg(2+) serves as cofactor.

The protein resides in the endoplasmic reticulum membrane. The catalysed reaction is a di-trans,poly-cis-dolichyl phosphate + UDP-N-acetyl-alpha-D-glucosamine = an N-acetyl-alpha-D-glucosaminyl-diphospho-di-trans,poly-cis-dolichol + UMP. Its pathway is protein modification; protein glycosylation. With respect to regulation, inhibited by natural nucleoside antibiotic tunicamycin, which acts as a structural analog and competitor of UDP-GlcNAc. Its function is as follows. UDP-N-acetylglucosamine--dolichyl-phosphate N-acetylglucosaminephosphotransferase that operates in the biosynthetic pathway of dolichol-linked oligosaccharides, the glycan precursors employed in protein asparagine (N)-glycosylation. The assembly of dolichol-linked oligosaccharides begins on the cytosolic side of the endoplasmic reticulum membrane and finishes in its lumen. The sequential addition of sugars to dolichol pyrophosphate produces dolichol-linked oligosaccharides containing fourteen sugars, including two GlcNAcs, nine mannoses and three glucoses. Once assembled, the oligosaccharide is transferred from the lipid to nascent proteins by oligosaccharyltransferases. Catalyzes the initial step of dolichol-linked oligosaccharide biosynthesis, transfering GlcNAc-1-P from cytosolic UDP-GlcNAc onto the carrier lipid dolichyl phosphate (P-dolichol), yielding GlcNAc-P-P-dolichol embedded in the cytoplasmic leaflet of the endoplasmic reticulum membrane. The protein is UDP-N-acetylglucosamine--dolichyl-phosphate N-acetylglucosaminephosphotransferase (DPAGT1) of Cricetulus longicaudatus (Long-tailed dwarf hamster).